We begin with the raw amino-acid sequence, 113 residues long: uncharacterized protein (113 aa).

This is an uncharacterized protein from Methanocaldococcus jannaschii (strain ATCC 43067 / DSM 2661 / JAL-1 / JCM 10045 / NBRC 100440) (Methanococcus jannaschii).